Here is a 169-residue protein sequence, read N- to C-terminus: Large ribosomal subunit protein bL17 (169 aa).

Residues 124-169 (EKAVKRQDRSRRVKGSKKAIDEKTSDDSASVEAAPAAPEAEEKKDA) are disordered. Basic residues predominate over residues 131–140 (DRSRRVKGSK). Residues 150 to 161 (DSASVEAAPAAP) are compositionally biased toward low complexity.

The protein belongs to the bacterial ribosomal protein bL17 family. In terms of assembly, part of the 50S ribosomal subunit. Contacts protein L32.

The sequence is that of Large ribosomal subunit protein bL17 from Chloroherpeton thalassium (strain ATCC 35110 / GB-78).